Reading from the N-terminus, the 843-residue chain is Ribosome biogenesis protein ERB1 (843 aa).

2 disordered regions span residues 36-189 (KKAA…RYIY) and 364-419 (ADES…REYL). Composition is skewed to acidic residues over residues 77-92 (VDED…YDLE), 106-139 (SDSE…EVPS), and 163-172 (ESNDLSDDNE). Over residues 173-183 (PNYRIEKDANG) the composition is skewed to basic and acidic residues. Over residues 379 to 396 (PKLPPPGYEESYHPPPEY) the composition is skewed to pro residues. Basic and acidic residues predominate over residues 397-406 (LPDKKEKEEW). WD repeat units follow at residues 487–526 (GHRG…QLWS), 530–570 (SDED…LELE), 668–706 (KGGG…LVKI), 709–754 (PGAR…RPYK), 758–797 (YHQK…DLLS), and 813–843 (TGDL…RLWM).

The protein belongs to the WD repeat BOP1/ERB1 family. Component of the NOP7 complex, composed of ERB1, NOP7 and YTM1. The complex is held together by ERB1, which interacts with NOP7 via its N-terminal domain and with YTM1 via a high-affinity interaction between the seven-bladed beta-propeller domains of the 2 proteins. The NOP7 complex associates with the 66S pre-ribosome.

Its subcellular location is the nucleus. It localises to the nucleolus. The protein resides in the nucleoplasm. Its function is as follows. Component of the NOP7 complex, which is required for maturation of the 25S and 5.8S ribosomal RNAs and formation of the 60S ribosome. This Coccidioides immitis (strain RS) (Valley fever fungus) protein is Ribosome biogenesis protein ERB1.